The sequence spans 72 residues: Protein RALF-like 20 (72 aa).

The first 27 residues, 1-27, serve as a signal peptide directing secretion; that stretch reads MVLSKKTIMQSFALMIILSIVMSTTEA. 2 cysteine pairs are disulfide-bonded: C43–C51 and C63–C69.

This sequence belongs to the plant rapid alkalinization factor (RALF) family.

The protein localises to the secreted. In terms of biological role, cell signaling peptide that may regulate plant stress, growth, and development. Mediates a rapid alkalinization of extracellular space by mediating a transient increase in the cytoplasmic Ca(2+) concentration leading to a calcium-dependent signaling events through a cell surface receptor and a concomitant activation of some intracellular mitogen-activated protein kinases. The polypeptide is Protein RALF-like 20 (RALFL20) (Arabidopsis thaliana (Mouse-ear cress)).